The chain runs to 260 residues: Dehydrogenase/reductase SDR family member 11 (260 aa).

A signal peptide spans 1-30 (MARPGMERWRDRLALVTGASGGIGAAVARA). Residues 18 to 23 (GASGGI), 43 to 44 (RT), Glu49, 70 to 71 (DL), and Asn97 each bind NADP(+). Residues Ser151 and Tyr166 each contribute to the substrate site. NADP(+)-binding positions include Tyr166, Lys170, 201 to 204 (VETQ), and Lys208. Tyr166 serves as the catalytic Proton acceptor.

The protein belongs to the short-chain dehydrogenases/reductases (SDR) family. In terms of assembly, homotetramer. In terms of tissue distribution, isoform 1: Ubiquitously expressed, with highest levels in testis, small intestine, colon, kidney, brain and heart. Isoform 3: Expressed in brain, heart and skeletal muscle.

It is found in the secreted. The enzyme catalyses a 3beta-hydroxysteroid + NADP(+) = a 3-oxosteroid + NADPH + H(+). It carries out the reaction 17beta-estradiol + NAD(+) = estrone + NADH + H(+). The catalysed reaction is 17beta-estradiol + NADP(+) = estrone + NADPH + H(+). It functions in the pathway steroid biosynthesis; estrogen biosynthesis. Inhibited by flavonoids including apigenin, luteolin, genistein, kaempferol and quercetin and also by carbenoxolone, zearalenone, glycyrrhetinic, curcumin and flufenamic acid. Functionally, catalyzes the conversion of the 17-keto group of estrone, 4- and 5-androstenes and 5-alpha-androstanes into their 17-beta-hydroxyl metabolites and the conversion of the 3-keto group of 3-, 3,17- and 3,20- diketosteroids into their 3-hydroxyl metabolites. Exhibits reductive 3-beta-hydroxysteroid dehydrogenase activity toward 5-beta-androstanes, 5-beta-pregnanes, 4-pregnenes and bile acids. May also reduce endogenous and exogenous alpha-dicarbonyl compounds and xenobiotic alicyclic ketones. This is Dehydrogenase/reductase SDR family member 11 (DHRS11) from Homo sapiens (Human).